A 435-amino-acid chain; its full sequence is rRNA methyltransferase 3A, mitochondrial (435 aa).

The N-terminal 42 residues, methionine 1 to arginine 42, are a transit peptide targeting the mitochondrion. Positions lysine 314 to valine 324 are enriched in polar residues. A disordered region spans residues lysine 314–lysine 351. Positions aspartate 328–aspartate 345 are enriched in acidic residues. Residues glycine 369 and leucine 402 each coordinate S-adenosyl-L-methionine.

This sequence belongs to the class IV-like SAM-binding methyltransferase superfamily. RNA methyltransferase TrmH family.

It localises to the mitochondrion. It carries out the reaction a uridine in rRNA + S-adenosyl-L-methionine = a 2'-O-methyluridine in rRNA + S-adenosyl-L-homocysteine + H(+). In terms of biological role, S-adenosyl-L-methionine-dependent 2'-O-ribose methyltransferase that catalyzes the formation of 2'-O-methylguanosine at position 1485 (Gm1485) in the mitochondrial large subunit ribosomal RNA (mtLSU rRNA), a conserved modification in the peptidyl transferase domain of the mtLSU rRNA. Also required for formation of 2'-O-methyluridine at position 1484 (Um1484) mediated by MRM2. This chain is rRNA methyltransferase 3A, mitochondrial (mrm3a), found in Danio rerio (Zebrafish).